Here is a 366-residue protein sequence, read N- to C-terminus: Aminomethyltransferase (366 aa).

This sequence belongs to the GcvT family. As to quaternary structure, the glycine cleavage system is composed of four proteins: P, T, L and H.

It carries out the reaction N(6)-[(R)-S(8)-aminomethyldihydrolipoyl]-L-lysyl-[protein] + (6S)-5,6,7,8-tetrahydrofolate = N(6)-[(R)-dihydrolipoyl]-L-lysyl-[protein] + (6R)-5,10-methylene-5,6,7,8-tetrahydrofolate + NH4(+). The glycine cleavage system catalyzes the degradation of glycine. This Bacillus cereus (strain 03BB102) protein is Aminomethyltransferase.